Consider the following 218-residue polypeptide: MSTLHKVKAYFGMAPMEDYDDEYYDDRAPSRGYARPRFDDDYGRYDGRDYDDARSDSRGDLRGEPADYPPPGYRGGYADEPRFRPREFDRAEMTRPRFGSWLRNSTRGALAMDPRRMAMMFEDGHPLSKITTLRPKDYSEARTIGERFRDGSPVIMDLVSMDNADAKRLVDFAAGLAFALRGSFDKVATKVFLLSPADVDVSPEERRRIAETGFYAYQ.

The tract at residues 20–81 is disordered; sequence DDEYYDDRAP…GYRGGYADEP (62 aa). A compositionally biased stretch (basic and acidic residues) spans 36–65; that stretch reads PRFDDDYGRYDGRDYDDARSDSRGDLRGEP.

The protein belongs to the SepF family. Homodimer. Interacts with FtsZ.

The protein localises to the cytoplasm. Cell division protein that is part of the divisome complex and is recruited early to the Z-ring. Probably stimulates Z-ring formation, perhaps through the cross-linking of FtsZ protofilaments. Its function overlaps with FtsA. The protein is Cell division protein SepF of Mycobacterium bovis (strain ATCC BAA-935 / AF2122/97).